Here is a 323-residue protein sequence, read N- to C-terminus: Viral cathepsin (323 aa).

Residues 1–16 form the signal peptide; sequence MNKILFYLFVYAVVKS. The propeptide at 17-112 is activation peptide; it reads AAYDPLKAPN…ILLDQPPGKG (96 aa). Cystine bridges form between cysteine 133–cysteine 174, cysteine 167–cysteine 207, and cysteine 262–cysteine 310. The active site involves cysteine 136. A glycan (N-linked (GlcNAc...) asparagine; by host) is linked at asparagine 158. Catalysis depends on residues histidine 269 and asparagine 289.

This sequence belongs to the peptidase C1 family. Synthesized as an inactive proenzyme and activated by proteolytic removal of the inhibitory propeptide.

It carries out the reaction Endopeptidase of broad specificity, hydrolyzing substrates of both cathepsin L and cathepsin B.. Functionally, cysteine protease that plays an essential role in host liquefaction to facilitate horizontal transmission of the virus. May participate in the degradation of foreign protein expressed by the baculovirus system. This chain is Viral cathepsin (VCATH), found in Bombyx mori (Silk moth).